The primary structure comprises 467 residues: MSDVLPIILSGGSGTRLWPLSRETYPKQFLPLVGEHSMLQATWLRSAPVAAHAPIVVANEEHRFMAAEQLQQLGVKPSAILLEPKGRNTAPAIAVAALEATRNGGDPLLLVLPSDHVIRDEAAFQAAVTVAAAAAEQGKLVTFGIKPTAPETGYGYIKAGAGTGATAVERFVEKPDLATAQGYLASGEYYWNSGMFLFRASRYLEELRKFQPAIADACQKAWEGGKRDADFTRLDKDAFASSPSDSIDYAVMEKTADAVVVPLDAGWNDVGSWSSLLDVSEQDGQGNAHHGDVIQLDCKNTYAYGSRLIAMVGLENVVVVETDDAVLVGHRDRIQEVKEVVSQIKSAGRSEATWHRKVYRPWGAYDSIDMGQRFQVKRITVKPGATLSLQMHHHRAEHWIVVSGTAEVTRGDEVLLLTENQSTYIPLGVTHRLKNPGKLPLELIEVQSGSYLGEDDIVRFEDTYGRT.

This sequence belongs to the mannose-6-phosphate isomerase type 2 family.

It catalyses the reaction D-mannose 6-phosphate = D-fructose 6-phosphate. The enzyme catalyses alpha-D-mannose 1-phosphate + GTP + H(+) = GDP-alpha-D-mannose + diphosphate. Its pathway is nucleotide-sugar biosynthesis; GDP-alpha-D-mannose biosynthesis; GDP-alpha-D-mannose from alpha-D-mannose 1-phosphate (GTP route): step 1/1. The protein operates within nucleotide-sugar biosynthesis; GDP-alpha-D-mannose biosynthesis; alpha-D-mannose 1-phosphate from D-fructose 6-phosphate: step 1/2. Functionally, involved in xanthan production. The sequence is that of Xanthan biosynthesis protein XanB (xanB) from Xanthomonas campestris pv. campestris (strain B100).